The chain runs to 464 residues: C-terminal processing peptidase, chloroplastic (464 aa).

A chloroplast-targeting transit peptide spans 1–32; it reads MHSRTNCLQTSVRAPQPHFRPFTAVKTCRQRC. A thylakoid-targeting transit peptide spans 33–77; sequence STTAAAAKRDQAQEQQPWIQVGLGLAAAATAVAVGLGAAALPAQA. The PDZ domain occupies 149–234; sequence LAALRRGTAG…SQVEVVLHAP (86 aa). Active-site charge relay system residues include serine 372 and lysine 397.

It belongs to the peptidase S41A family. As to quaternary structure, monomer.

Its subcellular location is the plastid. The protein localises to the chloroplast thylakoid lumen. It catalyses the reaction The enzyme shows specific recognition of a C-terminal tripeptide, Xaa-Yaa-Zaa, in which Xaa is preferably Ala or Leu, Yaa is preferably Ala or Tyr, and Zaa is preferably Ala, but then cleaves at a variable distance from the C-terminus. A typical cleavage is -Ala-Ala-|-Arg-Ala-Ala-Lys-Glu-Asn-Tyr-Ala-Leu-Ala-Ala.. With respect to regulation, not inhibited by antipain, 4-amidinophenylmethanesulfonyl fluoride, aprotinin, chymostatin, 3,4-dichloroisocoumarin, diisopropyl fluorophosphate, E64, EDTA, EGTA, iodoacetamide, leupeptin, pepstatin, o-phenanthroline, N-ethylmaleimide, phosphoramidon or phenylmethylsulfonyl fluoride. Its function is as follows. Protease involved in the C-terminal processing of the chloroplastic D1 protein of photosystem II. This proteolytic processing is necessary to allow the light-driven assembly of the tetranuclear manganese cluster, which is responsible for photosynthetic water oxidation. In Tetradesmus obliquus (Green alga), this protein is C-terminal processing peptidase, chloroplastic (ctpA).